The chain runs to 484 residues: 1,3-beta-glucanosyltransferase GAS5 (484 aa).

Positions Met1–Ala19 are cleaved as a signal peptide. Asn24 and Asn60 each carry an N-linked (GlcNAc...) asparagine glycan. Cys71 and Cys100 are joined by a disulfide. The (1,3-beta-D-glucosyl)n site is built by Tyr89, Asn159, and Glu160. Glu160 (proton donor) is an active-site residue. An N-linked (GlcNAc...) asparagine glycan is attached at Asn166. 2 residues coordinate (1,3-beta-D-glucosyl)n: Asp201 and Arg206. 2 disulfide bridges follow: Cys215–Cys348 and Cys234–Cys265. The active-site Nucleophile is Glu262. Tyr295 is a (1,3-beta-D-glucosyl)n binding site. N-linked (GlcNAc...) asparagine glycans are attached at residues Asn299, Asn344, and Asn359. The segment at Thr383–Gly462 is disordered. Over residues Lys394 to Thr404 the composition is skewed to acidic residues. Positions Ser405 to Gly462 are enriched in low complexity. Gly462 is lipidated: GPI-anchor amidated glycine. Positions Ala463–Leu484 are cleaved as a propeptide — removed in mature form.

It belongs to the glycosyl hydrolase 72 family. Post-translationally, the GPI-anchor is attached to the protein in the endoplasmic reticulum and serves to target the protein to the cell surface. There, the glucosamine-inositol phospholipid moiety is cleaved off and the GPI-modified mannoprotein is covalently attached via its lipidless GPI glycan remnant to the 1,6-beta-glucan of the outer cell wall layer.

Its subcellular location is the secreted. It is found in the cell wall. It localises to the membrane. Functionally, splits internally a 1,3-beta-glucan molecule and transfers the newly generated reducing end (the donor) to the non-reducing end of another 1,3-beta-glucan molecule (the acceptor) forming a 1,3-beta linkage, resulting in the elongation of 1,3-beta-glucan chains in the cell wall. Involved in cell wall biosynthesis and morphogenesis. In Saccharomyces cerevisiae (strain ATCC 204508 / S288c) (Baker's yeast), this protein is 1,3-beta-glucanosyltransferase GAS5 (GAS5).